The primary structure comprises 328 residues: Nucleotide-binding protein BL0705 (328 aa).

The disordered stretch occupies residues Met1–Pro35. The segment covering Ala13–Pro29 has biased composition (low complexity). Gly46–Ser53 contacts ATP. Asp101–Ser104 provides a ligand contact to GTP.

It belongs to the RapZ-like family.

Displays ATPase and GTPase activities. The protein is Nucleotide-binding protein BL0705 of Bifidobacterium longum (strain NCC 2705).